The primary structure comprises 242 residues: Ubiquinone/menaquinone biosynthesis C-methyltransferase UbiE (242 aa).

Residues threonine 69, aspartate 87, and 114-115 (NA) contribute to the S-adenosyl-L-methionine site.

The protein belongs to the class I-like SAM-binding methyltransferase superfamily. MenG/UbiE family.

The catalysed reaction is a 2-demethylmenaquinol + S-adenosyl-L-methionine = a menaquinol + S-adenosyl-L-homocysteine + H(+). It catalyses the reaction a 2-methoxy-6-(all-trans-polyprenyl)benzene-1,4-diol + S-adenosyl-L-methionine = a 5-methoxy-2-methyl-3-(all-trans-polyprenyl)benzene-1,4-diol + S-adenosyl-L-homocysteine + H(+). It participates in quinol/quinone metabolism; menaquinone biosynthesis; menaquinol from 1,4-dihydroxy-2-naphthoate: step 2/2. The protein operates within cofactor biosynthesis; ubiquinone biosynthesis. In terms of biological role, methyltransferase required for the conversion of demethylmenaquinol (DMKH2) to menaquinol (MKH2) and the conversion of 2-polyprenyl-6-methoxy-1,4-benzoquinol (DDMQH2) to 2-polyprenyl-3-methyl-6-methoxy-1,4-benzoquinol (DMQH2). The protein is Ubiquinone/menaquinone biosynthesis C-methyltransferase UbiE of Zymomonas mobilis subsp. mobilis (strain ATCC 31821 / ZM4 / CP4).